We begin with the raw amino-acid sequence, 738 residues long: Elongation factor G, mitochondrial (738 aa).

Positions 1 to 20 (MCIGPAPTPETEEELPPSPQ) are disordered. The 289-residue stretch at 32-320 (RFQRNIGVSA…GVCAYLPNPA (289 aa)) folds into the tr-type G domain. GTP contacts are provided by residues 41-48 (AHIDSGKT), 118-122 (DTPGH), and 172-175 (NKMD).

Belongs to the TRAFAC class translation factor GTPase superfamily. Classic translation factor GTPase family. EF-G/EF-2 subfamily.

The protein resides in the mitochondrion. It functions in the pathway protein biosynthesis; polypeptide chain elongation. Mitochondrial GTPase that catalyzes the GTP-dependent ribosomal translocation step during translation elongation. During this step, the ribosome changes from the pre-translocational (PRE) to the post-translocational (POST) state as the newly formed A-site-bound peptidyl-tRNA and P-site-bound deacylated tRNA move to the P and E sites, respectively. Catalyzes the coordinated movement of the two tRNA molecules, the mRNA and conformational changes in the ribosome. In Laccaria bicolor (strain S238N-H82 / ATCC MYA-4686) (Bicoloured deceiver), this protein is Elongation factor G, mitochondrial.